A 434-amino-acid chain; its full sequence is Adenylosuccinate synthetase (434 aa).

GTP is bound by residues 25 to 31 (GDEGKGK) and 53 to 55 (GHT). Catalysis depends on D26, which acts as the Proton acceptor. 2 residues coordinate Mg(2+): D26 and G53. Residues 26-29 (DEGK), 51-54 (NAGH), T142, R156, N233, T248, and R312 contribute to the IMP site. H54 serves as the catalytic Proton donor. Substrate is bound at residue 308-314 (VTTGRKR). GTP is bound by residues R314, 340–342 (KLD), and 422–424 (GVG).

This sequence belongs to the adenylosuccinate synthetase family. Homodimer. Mg(2+) is required as a cofactor.

Its subcellular location is the cytoplasm. The enzyme catalyses IMP + L-aspartate + GTP = N(6)-(1,2-dicarboxyethyl)-AMP + GDP + phosphate + 2 H(+). It functions in the pathway purine metabolism; AMP biosynthesis via de novo pathway; AMP from IMP: step 1/2. Its activity is regulated as follows. Competitively Inhibited by GMP. Allosterically inhibited by AMP. Functionally, plays an important role in the de novo pathway and in the salvage pathway of purine nucleotide biosynthesis. Catalyzes the first committed step in the biosynthesis of AMP from IMP. In Schizosaccharomyces pombe (strain 972 / ATCC 24843) (Fission yeast), this protein is Adenylosuccinate synthetase (ade2).